The chain runs to 129 residues: uncharacterized protein (129 aa).

3 consecutive transmembrane segments (helical) span residues 49–69, 72–92, and 101–118; these read LWSLYSMMLHILGFLANIVGV, FTIFAFSPADIAVYHFFNLIF, and YFNCVILCTCVSVYNLLQ.

It is found in the membrane. This is an uncharacterized protein from Saccharomyces cerevisiae (strain ATCC 204508 / S288c) (Baker's yeast).